A 612-amino-acid polypeptide reads, in one-letter code: Isocitrate dehydrogenase kinase/phosphatase (612 aa).

ATP contacts are provided by residues 327–333 (APGIKGL) and lysine 348. Residue aspartate 383 is part of the active site. Residues 593 to 612 (AGRASPEPDAPADARSVRVA) form a disordered region.

This sequence belongs to the AceK family.

It is found in the cytoplasm. It catalyses the reaction L-seryl-[isocitrate dehydrogenase] + ATP = O-phospho-L-seryl-[isocitrate dehydrogenase] + ADP + H(+). Its function is as follows. Bifunctional enzyme which can phosphorylate or dephosphorylate isocitrate dehydrogenase (IDH) on a specific serine residue. This is a regulatory mechanism which enables bacteria to bypass the Krebs cycle via the glyoxylate shunt in response to the source of carbon. When bacteria are grown on glucose, IDH is fully active and unphosphorylated, but when grown on acetate or ethanol, the activity of IDH declines drastically concomitant with its phosphorylation. This chain is Isocitrate dehydrogenase kinase/phosphatase, found in Paraburkholderia phytofirmans (strain DSM 17436 / LMG 22146 / PsJN) (Burkholderia phytofirmans).